The sequence spans 662 residues: Primary amine oxidase 2 (662 aa).

The first 22 residues, 1–22 (MSQLLLFTILVFSSVFVIGSLS), serve as a signal peptide directing secretion. N154 carries N-linked (GlcNAc...) asparagine glycosylation. 321–332 (FFDCGEFGCGQY) provides a ligand contact to substrate. Residue D323 is the Proton acceptor of the active site. A disulfide bridge links C342 with C368. Substrate is bound at residue 405 to 410 (VGNYDY). Catalysis depends on Y408, which acts as the Schiff-base intermediate with substrate; via topaquinone. 2',4',5'-topaquinone is present on Y408. Cu cation is bound by residues H464 and H466. Positions 473 and 475 each coordinate Mn(2+). N-linked (GlcNAc...) asparagine glycosylation is present at N568. Residues D602 and I603 each coordinate Mn(2+). H613 is a binding site for Cu cation.

This sequence belongs to the copper/topaquinone oxidase family. In terms of assembly, homodimer. It depends on Cu cation as a cofactor. The cofactor is Mn(2+). L-topaquinone serves as cofactor. Post-translationally, topaquinone (TPQ) is generated by copper-dependent autoxidation of a specific tyrosyl residue.

It catalyses the reaction a primary methyl amine + O2 + H2O = an aldehyde + H2O2 + NH4(+). This is Primary amine oxidase 2 from Arabidopsis thaliana (Mouse-ear cress).